A 267-amino-acid polypeptide reads, in one-letter code: Matrilysin (267 aa).

The signal sequence occupies residues 1-20 (MAAMRLTLFRIVCLLPGCLA). The propeptide at 21–97 (LPLSQEAGEV…PRCGVPDVAE (77 aa)) is activation peptide. Residues 88 to 95 (PRCGVPDV) carry the Cysteine switch motif. Residue cysteine 90 coordinates Zn(2+). Aspartate 156 is a binding site for Ca(2+). 2 residues coordinate Zn(2+): histidine 166 and aspartate 168. Ca(2+)-binding residues include aspartate 173, glycine 174, glycine 176, and threonine 178. Histidine 181 is a Zn(2+) binding site. Glycine 188, glycine 190, and aspartate 192 together coordinate Ca(2+). Residue histidine 194 participates in Zn(2+) binding. 2 residues coordinate Ca(2+): aspartate 196 and glutamate 199. A Zn(2+)-binding site is contributed by histidine 217. Glutamate 218 is an active-site residue. The Zn(2+) site is built by histidine 221 and histidine 227.

It belongs to the peptidase M10A family. It depends on Ca(2+) as a cofactor. Requires Zn(2+) as cofactor.

Its subcellular location is the secreted. It localises to the extracellular space. The protein resides in the extracellular matrix. The enzyme catalyses Cleavage of 14-Ala-|-Leu-15 and 16-Tyr-|-Leu-17 in B chain of insulin. No action on collagen types I, II, IV, V. Cleaves gelatin chain alpha2(I) &gt; alpha1(I).. Its function is as follows. Degrades casein, gelatins of types I, III, IV, and V, and fibronectin. Activates procollagenase. The chain is Matrilysin (Mmp7) from Rattus norvegicus (Rat).